The chain runs to 186 residues: Elongation factor P (186 aa).

It belongs to the elongation factor P family.

Its subcellular location is the cytoplasm. The protein operates within protein biosynthesis; polypeptide chain elongation. In terms of biological role, involved in peptide bond synthesis. Stimulates efficient translation and peptide-bond synthesis on native or reconstituted 70S ribosomes in vitro. Probably functions indirectly by altering the affinity of the ribosome for aminoacyl-tRNA, thus increasing their reactivity as acceptors for peptidyl transferase. The polypeptide is Elongation factor P (Polynucleobacter necessarius subsp. necessarius (strain STIR1)).